The chain runs to 446 residues: Baeyer-Villiger oxidase mdpL (446 aa).

This sequence belongs to the AflY oxidoreductase family. The cofactor is NADPH.

The protein operates within secondary metabolite biosynthesis. In terms of biological role, baeyer-Villiger oxidase; part of the gene cluster that mediates the biosynthesis of monodictyphenone, a prenyl xanthone derivative. The pathway begins with the synthesis of atrochrysone thioester by the polyketide synthase (PKS) mdpG. The atrochrysone carboxyl ACP thioesterase mdpF then breaks the thioester bond and releases the atrochrysone carboxylic acid from mdpG. The atrochrysone carboxylic acid is then converted to atrochrysone which is further transformed into emodin anthrone. The next step is performed by the anthrone oxygenase mdpH that catalyzes the oxidation of emodinanthrone to emodin. Emodin is further modified to yield monodictyphenone via several steps involving mdpB, mdpC mdpJ, mdpK and mdpL. These enzymes with xptA, xptB and xptC are also proposed to be involved in the synthesis of shamixanthone from emodin. Especially, direct reduction of emodin by the short chain dehydrogenase mdpC followed by dehydration catalyzed by the scytalone dehydratase-like protein mdpB gives loss of oxygen and formation of chrysophanol intermediate in two simple steps. The polypeptide is Baeyer-Villiger oxidase mdpL (Emericella nidulans (strain FGSC A4 / ATCC 38163 / CBS 112.46 / NRRL 194 / M139) (Aspergillus nidulans)).